The sequence spans 133 residues: Small ribosomal subunit protein uS8 (133 aa).

This sequence belongs to the universal ribosomal protein uS8 family. As to quaternary structure, part of the 30S ribosomal subunit. Contacts proteins S5 and S12.

In terms of biological role, one of the primary rRNA binding proteins, it binds directly to 16S rRNA central domain where it helps coordinate assembly of the platform of the 30S subunit. The chain is Small ribosomal subunit protein uS8 from Deinococcus radiodurans (strain ATCC 13939 / DSM 20539 / JCM 16871 / CCUG 27074 / LMG 4051 / NBRC 15346 / NCIMB 9279 / VKM B-1422 / R1).